The following is a 305-amino-acid chain: uncharacterized protein (305 aa).

This is an uncharacterized protein from Acanthamoeba polyphaga mimivirus (APMV).